Reading from the N-terminus, the 280-residue chain is Energy-coupling factor transporter ATP-binding protein EcfA2 (280 aa).

In terms of domain architecture, ABC transporter spans 3 to 245 (ISLENVSYTY…VAFLKEKQLG (243 aa)). Residue 40-47 (GHTGSGKS) coordinates ATP.

It belongs to the ABC transporter superfamily. Energy-coupling factor EcfA family. In terms of assembly, forms a stable energy-coupling factor (ECF) transporter complex composed of 2 membrane-embedded substrate-binding proteins (S component), 2 ATP-binding proteins (A component) and 2 transmembrane proteins (T component).

The protein localises to the cell membrane. In terms of biological role, ATP-binding (A) component of a common energy-coupling factor (ECF) ABC-transporter complex. Unlike classic ABC transporters this ECF transporter provides the energy necessary to transport a number of different substrates. This chain is Energy-coupling factor transporter ATP-binding protein EcfA2, found in Streptococcus thermophilus (strain CNRZ 1066).